The chain runs to 94 residues: Co-chaperonin GroES (94 aa).

The protein belongs to the GroES chaperonin family. Heptamer of 7 subunits arranged in a ring. Interacts with the chaperonin GroEL.

It localises to the cytoplasm. Together with the chaperonin GroEL, plays an essential role in assisting protein folding. The GroEL-GroES system forms a nano-cage that allows encapsulation of the non-native substrate proteins and provides a physical environment optimized to promote and accelerate protein folding. GroES binds to the apical surface of the GroEL ring, thereby capping the opening of the GroEL channel. The chain is Co-chaperonin GroES from Clostridium botulinum (strain Eklund 17B / Type B).